The sequence spans 1684 residues: Latrophilin Cirl (1684 aa).

The Extracellular segment spans residues 1–765; that stretch reads MASNNYIQIM…LFTMFDGNMR (765 aa). In terms of domain architecture, SUEL-type lectin spans 21-110; it reads ACEGKKLTIE…KYLEAHYQCV (90 aa). Asn138, Asn251, Asn297, and Asn336 each carry an N-linked (GlcNAc...) asparagine glycan. A disordered region spans residues 181-300; it reads PPATHATPPG…GPSVSSNGSA (120 aa). 2 stretches are compositionally biased toward polar residues: residues 250-260 and 278-300; these read SNATAPSNTRI and KSSP…NGSA. The segment at 370 to 391 is disordered; sequence SFDEDDEEMAGTSTTTPMSTSS. Over residues 381–391 the composition is skewed to low complexity; it reads TSTTTPMSTSS. N-linked (GlcNAc...) asparagine glycans are attached at residues Asn396, Asn653, Asn701, and Asn728. The GAIN-B domain occupies 559-752; sequence RSVVQKVKNI…AILMDVVDEH (194 aa). Cystine bridges form between Cys707-Cys734 and Cys722-Cys736. The GPS stretch occupies residues 707 to 752; the sequence is CVFWNYIDHAWSANGCSLESTNRTHSVCSCNHLTNFAILMDVVDEH. A helical membrane pass occupies residues 766–786; sequence IFIYISIAICVVFIVIALLTL. At 787–799 the chain is on the cytoplasmic side; the sequence is KLFNGVFVKSART. The chain crosses the membrane as a helical span at residues 800–820; the sequence is SIYINIYICLLAIELLFLLGI. The Extracellular portion of the chain corresponds to 821–826; that stretch reads EQTETS. Residues 827 to 847 traverse the membrane as a helical segment; the sequence is IFCGFITVFLHCAILSGTSWF. Over 848–873 the chain is Cytoplasmic; it reads CYEAFHSYSTLTSDELLLEVDQTPKV. A helical membrane pass occupies residues 874–894; it reads NCYYLLSYGLSLSVVAISLVI. Topologically, residues 895–918 are extracellular; the sequence is NPSTYTQNDYCVLMEANAVFYATF. The chain crosses the membrane as a helical span at residues 919-939; sequence VAPVLIFFMAAIGYTFLSWII. Residues 940–966 are Cytoplasmic-facing; it reads MCRKSRTGLKTKEHTRLATVRFDIRCS. Residues 967-987 form a helical membrane-spanning segment; sequence FVFFLLLSAVWCSAYFYLRGA. Residues 988-994 are Extracellular-facing; that stretch reads KMDEDVT. The helical transmembrane segment at 995–1015 threads the bilayer; the sequence is GIYGYNFICFNTLLGLYIFVF. Residues 1016-1684 are Cytoplasmic-facing; sequence HCIQNEKIRR…VRCYLEPLAK (669 aa). Positions 1080-1100 are disordered; that stretch reads PLGTNDDAHDEQQQQQHMSAT. A phosphoserine mark is found at Ser1156, Ser1247, and Ser1254. Disordered stretches follow at residues 1228 to 1255, 1270 to 1353, 1441 to 1520, and 1587 to 1669; these read KPNS…LHSR, KTKP…APPP, SRYG…LPPQ, and SMRG…SAML. The segment covering 1298–1314 has biased composition (low complexity); the sequence is QQQQQLRQQRQQQQQQL. A phosphoserine mark is found at Ser1315 and Ser1316. Over residues 1328–1348 the composition is skewed to low complexity; sequence LHLQHQQQQQQQRRAGGQQQL. A compositionally biased stretch (polar residues) spans 1455–1466; it reads RNQQQQQHSLAQ. 2 stretches are compositionally biased toward acidic residues: residues 1476-1489 and 1499-1512; these read DEDD…EETT and CDEE…DMED. Residues 1631-1654 show a composition bias toward low complexity; that stretch reads QQLQKLSPQSTTSSSSHTSHSNPH.

It belongs to the G-protein coupled receptor 2 family. LN-TM7 subfamily. In terms of assembly, forms a heterodimer, consisting of a large extracellular region non-covalently linked to a seven-transmembrane moiety. Post-translationally, proteolytically cleaved into 2 subunits, an extracellular subunit and a seven-transmembrane subunit.

The protein resides in the cell membrane. The sequence is that of Latrophilin Cirl from Drosophila persimilis (Fruit fly).